The sequence spans 116 residues: Ribonuclease P protein component (116 aa).

This sequence belongs to the RnpA family. Consists of a catalytic RNA component (M1 or rnpB) and a protein subunit.

The catalysed reaction is Endonucleolytic cleavage of RNA, removing 5'-extranucleotides from tRNA precursor.. RNaseP catalyzes the removal of the 5'-leader sequence from pre-tRNA to produce the mature 5'-terminus. It can also cleave other RNA substrates such as 4.5S RNA. The protein component plays an auxiliary but essential role in vivo by binding to the 5'-leader sequence and broadening the substrate specificity of the ribozyme. In Geobacillus sp. (strain WCH70), this protein is Ribonuclease P protein component.